The chain runs to 164 residues: Crossover junction endodeoxyribonuclease RuvC (164 aa).

Residues D7, E67, and D139 contribute to the active site. Mg(2+)-binding residues include D7, E67, and D139.

This sequence belongs to the RuvC family. As to quaternary structure, homodimer which binds Holliday junction (HJ) DNA. The HJ becomes 2-fold symmetrical on binding to RuvC with unstacked arms; it has a different conformation from HJ DNA in complex with RuvA. In the full resolvosome a probable DNA-RuvA(4)-RuvB(12)-RuvC(2) complex forms which resolves the HJ. The cofactor is Mg(2+).

The protein resides in the cytoplasm. The catalysed reaction is Endonucleolytic cleavage at a junction such as a reciprocal single-stranded crossover between two homologous DNA duplexes (Holliday junction).. The RuvA-RuvB-RuvC complex processes Holliday junction (HJ) DNA during genetic recombination and DNA repair. Endonuclease that resolves HJ intermediates. Cleaves cruciform DNA by making single-stranded nicks across the HJ at symmetrical positions within the homologous arms, yielding a 5'-phosphate and a 3'-hydroxyl group; requires a central core of homology in the junction. The consensus cleavage sequence is 5'-(A/T)TT(C/G)-3'. Cleavage occurs on the 3'-side of the TT dinucleotide at the point of strand exchange. HJ branch migration catalyzed by RuvA-RuvB allows RuvC to scan DNA until it finds its consensus sequence, where it cleaves and resolves the cruciform DNA. This Geobacter sulfurreducens (strain ATCC 51573 / DSM 12127 / PCA) protein is Crossover junction endodeoxyribonuclease RuvC.